The following is a 362-amino-acid chain: Chalcone synthase A (362 aa).

Cys168 is an active-site residue.

It belongs to the thiolase-like superfamily. Chalcone/stilbene synthases family.

The catalysed reaction is (E)-4-coumaroyl-CoA + 3 malonyl-CoA + 3 H(+) = 2',4,4',6'-tetrahydroxychalcone + 3 CO2 + 4 CoA. Its pathway is secondary metabolite biosynthesis; flavonoid biosynthesis. The primary product of this enzyme is 4,2',4',6'-tetrahydroxychalcone (also termed naringenin-chalcone or chalcone) which can under specific conditions spontaneously isomerize into naringenin. In Ipomoea trifida (Morning glory), this protein is Chalcone synthase A (CHSA).